The following is a 103-amino-acid chain: UPF0473 protein LVIS_1220 (103 aa).

This sequence belongs to the UPF0473 family.

The protein is UPF0473 protein LVIS_1220 of Levilactobacillus brevis (strain ATCC 367 / BCRC 12310 / CIP 105137 / JCM 1170 / LMG 11437 / NCIMB 947 / NCTC 947) (Lactobacillus brevis).